The primary structure comprises 278 residues: Large ribosomal subunit protein uL2 (278 aa).

Disordered stretches follow at residues 1-59 and 222-278; these read MAIR…GGHK and RGAA…NKKR. Positions 16–27 are enriched in polar residues; it reads SSVSEFSEITRS. 2 stretches are compositionally biased toward basic residues: residues 45–59 and 269–278; these read VHGHITTRHKGGGHK and VRRRRPNKKR.

The protein belongs to the universal ribosomal protein uL2 family. As to quaternary structure, part of the 50S ribosomal subunit. Forms a bridge to the 30S subunit in the 70S ribosome.

Its function is as follows. One of the primary rRNA binding proteins. Required for association of the 30S and 50S subunits to form the 70S ribosome, for tRNA binding and peptide bond formation. It has been suggested to have peptidyltransferase activity; this is somewhat controversial. Makes several contacts with the 16S rRNA in the 70S ribosome. This Corynebacterium urealyticum (strain ATCC 43042 / DSM 7109) protein is Large ribosomal subunit protein uL2.